The sequence spans 318 residues: Endochitinase 1 (318 aa).

The first 18 residues, 1–18 (EFTTLFLLFSVLLLSASA), serve as a signal peptide directing secretion. In terms of domain architecture, Chitin-binding type-1 spans 19–60 (EQCGSQAGGALCASGLCCSKFGWCGDTNDYCGPGNCQSQCPG). Disulfide bonds link cysteine 21-cysteine 36, cysteine 30-cysteine 42, cysteine 35-cysteine 49, cysteine 54-cysteine 58, cysteine 89-cysteine 152, cysteine 164-cysteine 172, and cysteine 271-cysteine 303. Glutamate 134 (proton donor) is an active-site residue. The propeptide at 312–318 (GLLVDTM) is removed in mature form, vacuolar targeting.

This sequence belongs to the glycosyl hydrolase 19 family. Chitinase class I subfamily.

The protein resides in the vacuole. The catalysed reaction is Random endo-hydrolysis of N-acetyl-beta-D-glucosaminide (1-&gt;4)-beta-linkages in chitin and chitodextrins.. Functionally, defense against chitin-containing fungal pathogens. The sequence is that of Endochitinase 1 (CHTB1) from Solanum tuberosum (Potato).